The chain runs to 309 residues: uncharacterized protein (309 aa).

This is an uncharacterized protein from Aquifex aeolicus (strain VF5).